A 300-amino-acid polypeptide reads, in one-letter code: Protein FANTASTIC FOUR 4 (300 aa).

Residues Pro-30–Ala-56 show a composition bias toward polar residues. 3 disordered regions span residues Pro-30–Ser-104, Thr-142–Pro-170, and Thr-227–Glu-264. Low complexity-rich tracts occupy residues Ser-58–Ser-88 and Thr-142–Thr-151. The FAF domain maps to Ser-166–Ile-217. Acidic residues predominate over residues Lys-233–Glu-262.

Belongs to the fantastic four family. Expressed in the shoot apex and young siliques. Detected in provascular and vascular tissue, but not in the vegetative meristem. In inflorescences, restricted to the base of the flower and to the vasculature of the stem and the pedicels, but absent from young flowers. Detected in the center of the inflorescence meristem.

Its function is as follows. Regulates the size of the shoot meristem by modulating the CLV3-WUS feedback loop. Can repress WUS but is under negative control by CLV3. This is Protein FANTASTIC FOUR 4 (FAF4) from Arabidopsis thaliana (Mouse-ear cress).